A 212-amino-acid chain; its full sequence is Large ribosomal subunit protein uL3 (212 aa).

The disordered stretch occupies residues M135–G156. The residue at position 153 (Q153) is an N5-methylglutamine.

It belongs to the universal ribosomal protein uL3 family. In terms of assembly, part of the 50S ribosomal subunit. Forms a cluster with proteins L14 and L19. Methylated by PrmB.

One of the primary rRNA binding proteins, it binds directly near the 3'-end of the 23S rRNA, where it nucleates assembly of the 50S subunit. This is Large ribosomal subunit protein uL3 from Tolumonas auensis (strain DSM 9187 / NBRC 110442 / TA 4).